Here is a 251-residue protein sequence, read N- to C-terminus: Ubiquinone/menaquinone biosynthesis C-methyltransferase UbiE (251 aa).

S-adenosyl-L-methionine is bound by residues T74, D95, and 123–124 (NA).

This sequence belongs to the class I-like SAM-binding methyltransferase superfamily. MenG/UbiE family.

The enzyme catalyses a 2-demethylmenaquinol + S-adenosyl-L-methionine = a menaquinol + S-adenosyl-L-homocysteine + H(+). It carries out the reaction a 2-methoxy-6-(all-trans-polyprenyl)benzene-1,4-diol + S-adenosyl-L-methionine = a 5-methoxy-2-methyl-3-(all-trans-polyprenyl)benzene-1,4-diol + S-adenosyl-L-homocysteine + H(+). The protein operates within quinol/quinone metabolism; menaquinone biosynthesis; menaquinol from 1,4-dihydroxy-2-naphthoate: step 2/2. It participates in cofactor biosynthesis; ubiquinone biosynthesis. In terms of biological role, methyltransferase required for the conversion of demethylmenaquinol (DMKH2) to menaquinol (MKH2) and the conversion of 2-polyprenyl-6-methoxy-1,4-benzoquinol (DDMQH2) to 2-polyprenyl-3-methyl-6-methoxy-1,4-benzoquinol (DMQH2). This chain is Ubiquinone/menaquinone biosynthesis C-methyltransferase UbiE, found in Shewanella frigidimarina (strain NCIMB 400).